The chain runs to 280 residues: Nucleotide-binding protein Mfla_0145 (280 aa).

8-15 (GLSGSGKS) provides a ligand contact to ATP. 57 to 60 (DTRS) serves as a coordination point for GTP.

It belongs to the RapZ-like family.

In terms of biological role, displays ATPase and GTPase activities. The polypeptide is Nucleotide-binding protein Mfla_0145 (Methylobacillus flagellatus (strain ATCC 51484 / DSM 6875 / VKM B-1610 / KT)).